The chain runs to 640 residues: Asparagine synthetase domain-containing protein 1 (640 aa).

Cys-2 serves as the catalytic For GATase activity. Positions 2–184 (CGICCAVSFS…ASGIFRIDLK (183 aa)) constitute a Glutamine amidotransferase type-2 domain. An Asparagine synthetase domain is found at 286 to 602 (QFIGVLSTAV…GLTASALLPK (317 aa)).

The chain is Asparagine synthetase domain-containing protein 1 (ASNSD1) from Bos taurus (Bovine).